A 211-amino-acid polypeptide reads, in one-letter code: Thiamine-phosphate synthase (211 aa).

Residues 41-45 and Asn-73 each bind 4-amino-2-methyl-5-(diphosphooxymethyl)pyrimidine; that span reads QYRDK. Asp-74 and Asp-93 together coordinate Mg(2+). 4-amino-2-methyl-5-(diphosphooxymethyl)pyrimidine is bound at residue Thr-112. 139–141 is a binding site for 2-[(2R,5Z)-2-carboxy-4-methylthiazol-5(2H)-ylidene]ethyl phosphate; sequence SPT. Lys-142 is a 4-amino-2-methyl-5-(diphosphooxymethyl)pyrimidine binding site. Residues Gly-169 and 189-190 contribute to the 2-[(2R,5Z)-2-carboxy-4-methylthiazol-5(2H)-ylidene]ethyl phosphate site; that span reads VS.

The protein belongs to the thiamine-phosphate synthase family. The cofactor is Mg(2+).

It catalyses the reaction 2-[(2R,5Z)-2-carboxy-4-methylthiazol-5(2H)-ylidene]ethyl phosphate + 4-amino-2-methyl-5-(diphosphooxymethyl)pyrimidine + 2 H(+) = thiamine phosphate + CO2 + diphosphate. The catalysed reaction is 2-(2-carboxy-4-methylthiazol-5-yl)ethyl phosphate + 4-amino-2-methyl-5-(diphosphooxymethyl)pyrimidine + 2 H(+) = thiamine phosphate + CO2 + diphosphate. The enzyme catalyses 4-methyl-5-(2-phosphooxyethyl)-thiazole + 4-amino-2-methyl-5-(diphosphooxymethyl)pyrimidine + H(+) = thiamine phosphate + diphosphate. Its pathway is cofactor biosynthesis; thiamine diphosphate biosynthesis; thiamine phosphate from 4-amino-2-methyl-5-diphosphomethylpyrimidine and 4-methyl-5-(2-phosphoethyl)-thiazole: step 1/1. Condenses 4-methyl-5-(beta-hydroxyethyl)thiazole monophosphate (THZ-P) and 2-methyl-4-amino-5-hydroxymethyl pyrimidine pyrophosphate (HMP-PP) to form thiamine monophosphate (TMP). The sequence is that of Thiamine-phosphate synthase from Thioalkalivibrio sulfidiphilus (strain HL-EbGR7).